Consider the following 434-residue polypeptide: Methylenetetrahydrofolate--tRNA-(uracil-5-)-methyltransferase TrmFO (434 aa).

9–14 contributes to the FAD binding site; it reads GAGLAG.

The protein belongs to the MnmG family. TrmFO subfamily. FAD is required as a cofactor.

Its subcellular location is the cytoplasm. The enzyme catalyses uridine(54) in tRNA + (6R)-5,10-methylene-5,6,7,8-tetrahydrofolate + NADH + H(+) = 5-methyluridine(54) in tRNA + (6S)-5,6,7,8-tetrahydrofolate + NAD(+). It carries out the reaction uridine(54) in tRNA + (6R)-5,10-methylene-5,6,7,8-tetrahydrofolate + NADPH + H(+) = 5-methyluridine(54) in tRNA + (6S)-5,6,7,8-tetrahydrofolate + NADP(+). In terms of biological role, catalyzes the folate-dependent formation of 5-methyl-uridine at position 54 (M-5-U54) in all tRNAs. In Listeria innocua serovar 6a (strain ATCC BAA-680 / CLIP 11262), this protein is Methylenetetrahydrofolate--tRNA-(uracil-5-)-methyltransferase TrmFO.